A 264-amino-acid polypeptide reads, in one-letter code: tRNA (guanine-N(7)-)-methyltransferase (264 aa).

A disordered region spans residues 1 to 39 (MIHDDDPNAPGAPHDDATAAPASATRAAPAAGDDDDANP). The segment covering 18–31 (TAAPASATRAAPAA) has biased composition (low complexity). 4 residues coordinate S-adenosyl-L-methionine: Glu94, Glu119, Asp146, and Asp169. The active site involves Asp169. Substrate-binding positions include Lys173, Asp205, and 240–243 (TKFE).

This sequence belongs to the class I-like SAM-binding methyltransferase superfamily. TrmB family.

The enzyme catalyses guanosine(46) in tRNA + S-adenosyl-L-methionine = N(7)-methylguanosine(46) in tRNA + S-adenosyl-L-homocysteine. It functions in the pathway tRNA modification; N(7)-methylguanine-tRNA biosynthesis. Functionally, catalyzes the formation of N(7)-methylguanine at position 46 (m7G46) in tRNA. The sequence is that of tRNA (guanine-N(7)-)-methyltransferase from Burkholderia mallei (strain ATCC 23344).